Here is a 252-residue protein sequence, read N- to C-terminus: D-aminoacyl-tRNA deacylase (252 aa).

It belongs to the DtdA deacylase family. As to quaternary structure, monomer. Requires Zn(2+) as cofactor.

It catalyses the reaction a D-aminoacyl-tRNA + H2O = a tRNA + a D-alpha-amino acid + H(+). It carries out the reaction glycyl-tRNA(Ala) + H2O = tRNA(Ala) + glycine + H(+). In terms of biological role, D-aminoacyl-tRNA deacylase with broad substrate specificity. By recycling D-aminoacyl-tRNA to D-amino acids and free tRNA molecules, this enzyme counteracts the toxicity associated with the formation of D-aminoacyl-tRNA entities in vivo. This is D-aminoacyl-tRNA deacylase from Pyrobaculum arsenaticum (strain DSM 13514 / JCM 11321 / PZ6).